Consider the following 499-residue polypeptide: Xylulose kinase (499 aa).

Substrate is bound at residue 81 to 82 (MH). D239 functions as the Proton acceptor in the catalytic mechanism.

Belongs to the FGGY kinase family.

It carries out the reaction D-xylulose + ATP = D-xylulose 5-phosphate + ADP + H(+). In terms of biological role, catalyzes the phosphorylation of D-xylulose to D-xylulose 5-phosphate. The protein is Xylulose kinase of Bacillus subtilis (strain 168).